The primary structure comprises 155 residues: Ribosome maturation factor RimP (155 aa).

The protein belongs to the RimP family.

The protein resides in the cytoplasm. Functionally, required for maturation of 30S ribosomal subunits. The sequence is that of Ribosome maturation factor RimP from Listeria welshimeri serovar 6b (strain ATCC 35897 / DSM 20650 / CCUG 15529 / CIP 8149 / NCTC 11857 / SLCC 5334 / V8).